The chain runs to 205 residues: Probable molybdenum cofactor guanylyltransferase (205 aa).

Residues 9–11, K21, D66, and D95 each bind GTP; that span reads LAG. D95 is a Mg(2+) binding site.

Belongs to the MobA family. Mg(2+) serves as cofactor.

It is found in the cytoplasm. It carries out the reaction Mo-molybdopterin + GTP + H(+) = Mo-molybdopterin guanine dinucleotide + diphosphate. Transfers a GMP moiety from GTP to Mo-molybdopterin (Mo-MPT) cofactor (Moco or molybdenum cofactor) to form Mo-molybdopterin guanine dinucleotide (Mo-MGD) cofactor. This is Probable molybdenum cofactor guanylyltransferase from Pelotomaculum thermopropionicum (strain DSM 13744 / JCM 10971 / SI).